Here is a 304-residue protein sequence, read N- to C-terminus: uncharacterized protein (304 aa).

Coiled coils occupy residues 3 to 35 (KNQY…DKEI) and 89 to 132 (KSNK…NSNL). Residues 96–121 (LQNKQQENSEEKNSEEKNSEEKNSEE) form a disordered region.

This is an uncharacterized protein from Acanthamoeba polyphaga (Amoeba).